The following is a 737-amino-acid chain: Probable beta-glucosidase L (737 aa).

Positions 1–19 (MRSLIRSGALNAFLAASLA) are cleaved as a signal peptide. N-linked (GlcNAc...) asparagine glycosylation is present at Asn225. The active site involves Asp253. N-linked (GlcNAc...) asparagine glycosylation is found at Asn340, Asn365, and Asn608.

This sequence belongs to the glycosyl hydrolase 3 family.

It localises to the secreted. It catalyses the reaction Hydrolysis of terminal, non-reducing beta-D-glucosyl residues with release of beta-D-glucose.. It functions in the pathway glycan metabolism; cellulose degradation. Beta-glucosidases are one of a number of cellulolytic enzymes involved in the degradation of cellulosic biomass. Catalyzes the last step releasing glucose from the inhibitory cellobiose. This chain is Probable beta-glucosidase L (bglL), found in Emericella nidulans (strain FGSC A4 / ATCC 38163 / CBS 112.46 / NRRL 194 / M139) (Aspergillus nidulans).